The primary structure comprises 39 residues: Phosphatase RapI inhibitor (39 aa).

A propeptide spanning residues 1 to 34 (MKISRILLAAVILSSVFSITYLQSDHNTEIKVAA) is cleaved from the precursor.

Belongs to the Phr family. In terms of processing, contains a predicted signal peptide cleavage site in the N-terminal region, however the propeptide is probably subject to only one processing event, at the N-terminal end of the mature peptide.

Its subcellular location is the secreted. The protein resides in the cytoplasm. Functionally, intercellular signaling molecule that inhibits excision of the mobile genetic element ICEBs1 when cells are crowded by cells that contain ICEBs1 and produce the PhrI peptide. Secreted during production, but the mature peptide acts intracellularly, indicating that it needs to be imported into the cell to function. Acts by inhibiting RapI activity. This is Phosphatase RapI inhibitor (phrI) from Bacillus subtilis (strain 168).